We begin with the raw amino-acid sequence, 699 residues long: MDKVLNREESMELMDLLGLERAAWGNLPLMRKAYLRKCKEFHPDKGGDEDKMKRMNTLYKKMEQDVKVAHQPDFGAWHSSEVPTYGTEEWEAWWSSFNEKWDEDLFCHEDMFQSDEEGTADSQHSTPPKKKRKVEDPKDFPPDLHAFLSQAVFSNRTLACFAVYTTKEKGQILYKKLMEKYSVTFISRHSSHGHNILFFLTPHRHRVSAINNFCQKLCTFSFLICKGVNKEYLLYSTLSRDPYSIVEESIQGGLKEHDFNPEEPEETKQVSWKLITEYALETKCEDVFLLLGMYLEFQHNPEECRKCQKKEQPYHFKFHEKHFANATIFADSKNQKSICQQAVDTVLAKKRVDTLHMTREEMLTERFNHILDKMDIMFGATGSAVLEHYMAGVAWLHCLLPKMDTLIYDFLNCIVFNIPKRRYWLFKGPIDSGKTTLAAGLLDLCGGKALNVNLPMERLTFELGVAIDQFMVVFEDVKGSGAESKDLPSGHGINNLDSLRDYLDGSVKVNLEKKHLNKRTQIFPPGLVTMNEYPLPKTLQARFVKQIDFKPKIYLRKALNNSEFLLEKRILQSGMTLLLLLIWFRPVADFASDIQHRIVQWKERLDSEISMYTFSRMKYNICMGKCILDWAREEESETEDSGHGSSTESQSQCFSQASDTSGSADAPASQTPDPYDHDNPYHICKGFVCFKRPKTPPPK.

Residue Met-1 is modified to N-acetylmethionine; by host. The region spanning 12-75 (ELMDLLGLER…VKVAHQPDFG (64 aa)) is the J domain. Positions 105–109 (LFCHE) match the LXCXE motif motif. A phosphoserine; by host mark is found at Ser-114, Ser-122, and Ser-125. Residues 115–137 (DEEGTADSQHSTPPKKKRKVEDP) are disordered. A Phosphothreonine; by host modification is found at Thr-126. The short motif at 127-134 (PPKKKRKV) is the Nuclear localization signal element. A DNA-binding region (T-ag OBD) is located at residues 141 to 256 (PPDLHAFLSQ…EESIQGGLKE (116 aa)). The T-ag D1-type zinc finger occupies 267–359 (TKQVSWKLIT…KRVDTLHMTR (93 aa)). Zn(2+)-binding residues include Cys-304, Cys-307, His-315, and His-319. In terms of domain architecture, SF3 helicase spans 402 to 562 (KMDTLIYDFL…IYLRKALNNS (161 aa)). 428-435 (GPIDSGKT) serves as a coordination point for ATP. Residues 637–678 (ETEDSGHGSSTESQSQCFSQASDTSGSADAPASQTPDPYDHD) form a disordered region. Residues 643–672 (HGSSTESQSQCFSQASDTSGSADAPASQTP) are compositionally biased toward polar residues. Ser-661 is subject to Phosphoserine; by host. Lys-691 carries the N6-acetyllysine; by host modification. Thr-695 is subject to Phosphothreonine; by host.

As to quaternary structure, forms homohexamers in the presence of ATP. Interacts with host HDAC1. Interacts (via LXCXE domain) with host RB1; the interaction induces the aberrant dissociation of RB1-E2F1 complex thereby disrupting RB1's activity. Interacts (via LXCXE domain) with host pRB-related proteins RBL1 and RBL2. Interacts (via C-terminus) with host TOP1 and POLA1 allowing DNA replication. Interacts with host TP53, inhibiting TP53 binding to DNA. Interacts with host preinitiation complex components TBP, TFIIA and TFIID to regulate transcription initiation. Mg(2+) serves as cofactor. Post-translationally, phosphorylated on both serine and threonine residues. Small t antigen inhibits the dephosphorylation by the AC form of PP2A. In terms of processing, O-Glycosylated near the C-terminal region. Acetylated by CBP in a TP53-dependent manner.

It localises to the host nucleus. It catalyses the reaction Couples ATP hydrolysis with the unwinding of duplex DNA by translocating in the 3'-5' direction.. The enzyme catalyses ATP + H2O = ADP + phosphate + H(+). Isoform large T antigen is a key early protein essential for both driving viral replication and inducing cellular transformation. Plays a role in viral genome replication by driving entry of quiescent cells into the cell cycle and by autoregulating the synthesis of viral early mRNA. Displays highly oncogenic activities by corrupting the host cellular checkpoint mechanisms that guard cell division and the transcription, replication, and repair of DNA. Participates in the modulation of cellular gene expression preceeding viral DNA replication. This step involves binding to host key cell cycle regulators retinoblastoma protein RB1/pRb and TP53. Induces the disassembly of host E2F1 transcription factors from RB1, thus promoting transcriptional activation of E2F1-regulated S-phase genes. Inhibits host TP53 binding to DNA, abrogating the ability of TP53 to stimulate gene expression. Plays the role of a TFIID-associated factor (TAF) in transcription initiation for all three RNA polymerases, by stabilizing the TBP-TFIIA complex on promoters. Initiates viral DNA replication and unwinding via interactions with the viral origin of replication. Binds two adjacent sites in the SV40 origin. The replication fork movement is facilitated by Large T antigen helicase activity. Has processive 3'-5' DNA helicase activity which requires a short 3' single-stranded region and ATP. Activates the transcription of viral late mRNA, through host TBP and TFIIA stabilization. Interferes with histone deacetylation mediated by HDAC1, leading to activation of transcription. The protein is Large T antigen of Papio hamadryas ursinus (Chacma baboon).